Here is a 432-residue protein sequence, read N- to C-terminus: Patatin-like phospholipase domain-containing protein 5 (432 aa).

In terms of domain architecture, PNPLA spans 12–181 (LSFSGSGYMG…SNNLPFSDCP (170 aa)). Residues 16–21 (GSGYMG) carry the GXGXXG motif. The GXSXG signature appears at 47-51 (GSSSG). Serine 49 acts as the Nucleophile in catalysis. Aspartate 168 (proton acceptor) is an active-site residue. The DGA/G motif lies at 168–170 (DGA). Positions 404–423 (ADSGLLRQQRGTAPSGNRPL) are disordered.

The enzyme catalyses a triacylglycerol + H2O = a diacylglycerol + a fatty acid + H(+). Its function is as follows. Has abundant triacylglycerol lipase activity. The polypeptide is Patatin-like phospholipase domain-containing protein 5 (Mus musculus (Mouse)).